Here is a 548-residue protein sequence, read N- to C-terminus: ATP synthase subunit alpha (548 aa).

Residue 172–179 (GDRKTGKT) participates in ATP binding. Residues 511–548 (FETTSGESVVPDENVEAMSEDDVEKESVKVRKPAPKKK) form a disordered region. Over residues 523-534 (ENVEAMSEDDVE) the composition is skewed to acidic residues.

It belongs to the ATPase alpha/beta chains family. In terms of assembly, F-type ATPases have 2 components, CF(1) - the catalytic core - and CF(0) - the membrane proton channel. CF(1) has five subunits: alpha(3), beta(3), gamma(1), delta(1), epsilon(1). CF(0) has three main subunits: a(1), b(2) and c(9-12). The alpha and beta chains form an alternating ring which encloses part of the gamma chain. CF(1) is attached to CF(0) by a central stalk formed by the gamma and epsilon chains, while a peripheral stalk is formed by the delta and b chains.

Its subcellular location is the cell membrane. It catalyses the reaction ATP + H2O + 4 H(+)(in) = ADP + phosphate + 5 H(+)(out). Functionally, produces ATP from ADP in the presence of a proton gradient across the membrane. The alpha chain is a regulatory subunit. The sequence is that of ATP synthase subunit alpha from Mycobacterium sp. (strain JLS).